A 942-amino-acid polypeptide reads, in one-letter code: MQNKIIIHGARAHNLKNIDVEIPRDKLVVVTGLSGSGKSSLAFDTIYAEGQRRYVESLSAYARQFLGNMEKPDVDSIDGLSPAISIDQKTTSKNPRSTVGTVTEINDYLRLLYARVGTPYCINGHGAITASSAEQIVEQVLALPERTRMQILAPIVRRKKGQHKTIFEKIQKDGYVRVRVDGDIFDVTEVPELSKSKMHNIEVVIDRLVNKDGIRSRLFDSVEAALRLGDGYLMIDTMDGNELLFSEHYSCPVCGFTVPELEPRLFSFNAPFGSCPTCDGLGIKLEVDLDLVVPDPSKSLKEGALAPWNPISSNYYPTMLEQAMASFGVDMDTPFEALTEEERDLVLYGSGDREFHFHYVNDFGGERNIDIPFEGVVTNVNRRYHETNSDYTRNVMRGYMNELTCATCHGYRLNDQALCVHVGGEEGPHIGQISELSIADHLQLLEELELTENESTIAKPIVKEIHDRLTFLNNVGLNYLTLSRAAGTLSGGESQRIRLATQIGSNLSGVLYILDEPSIGLHQRDNDRLIESLKKMRDLGNTLIVVEHDEDTMMQADWLIDVGPGAGEFGGEIIASGTPKQVAKNKKSITGQYLSGKKFIPVPLERRSGNGRFIEIKGAAQNNLQSLDVRFPLGKFIAVTGVSGSGKSTLVNSILKKAVAQKLNRNADKPGKYHSISGIEHIERLIDIDQSPIGRTPRSNPATYTGVFDDIRDLFARTNEAKIRGYKKGRFSFNVKGGRCEACSGDGIIKIEMHFLPDVYVPCEVCHGRRYNSETLEVHYKEKNIAEVLDMTVDDALVFFSAIPKIARKIQTIKDVGLGYVTLGQPATTLSGGEAQRMKLASELHKRSTGKSLYILDEPTTGLHTDDIARLLKVLERFVDDGNTVLVIEHNLDVIKSADHIIDLGPEGGVGGGQIVATGTPEEVAQVKESYTGHYLKVKLQQ.

32–39 (GLSGSGKS) is a binding site for ATP. The C4-type zinc-finger motif lies at 251-278 (CPVCGFTVPELEPRLFSFNAPFGSCPTC). ABC transporter domains lie at 308-589 (WNPI…KKSI) and 609-937 (GNGR…HYLK). Residue 641 to 648 (GVSGSGKS) coordinates ATP. The segment at 740-766 (CEACSGDGIIKIEMHFLPDVYVPCEVC) adopts a C4-type zinc-finger fold.

It belongs to the ABC transporter superfamily. UvrA family. As to quaternary structure, forms a heterotetramer with UvrB during the search for lesions.

It localises to the cytoplasm. In terms of biological role, the UvrABC repair system catalyzes the recognition and processing of DNA lesions. UvrA is an ATPase and a DNA-binding protein. A damage recognition complex composed of 2 UvrA and 2 UvrB subunits scans DNA for abnormalities. When the presence of a lesion has been verified by UvrB, the UvrA molecules dissociate. The chain is UvrABC system protein A from Streptococcus pyogenes serotype M6 (strain ATCC BAA-946 / MGAS10394).